Reading from the N-terminus, the 663-residue chain is Transketolase 1 (663 aa).

Histidine 26 contacts substrate. Residue lysine 46 is modified to N6-acetyllysine. Thiamine diphosphate contacts are provided by residues histidine 66 and 114-116 (GPL). Position 155 (aspartate 155) interacts with Mg(2+). Residues glycine 156 and asparagine 185 each coordinate thiamine diphosphate. Positions 185 and 187 each coordinate Mg(2+). 3 residues coordinate substrate: histidine 261, arginine 358, and serine 385. Histidine 261 is a thiamine diphosphate binding site. The active-site Proton donor is the glutamate 411. Phenylalanine 437 contacts thiamine diphosphate. Histidine 461, aspartate 469, histidine 473, and arginine 520 together coordinate substrate.

It belongs to the transketolase family. Homodimer. Mg(2+) serves as cofactor. Requires Ca(2+) as cofactor. It depends on Mn(2+) as a cofactor. The cofactor is Co(2+). Thiamine diphosphate is required as a cofactor.

The catalysed reaction is D-sedoheptulose 7-phosphate + D-glyceraldehyde 3-phosphate = aldehydo-D-ribose 5-phosphate + D-xylulose 5-phosphate. Its function is as follows. Catalyzes the transfer of a two-carbon ketol group from a ketose donor to an aldose acceptor, via a covalent intermediate with the cofactor thiamine pyrophosphate. Thus, catalyzes the reversible transfer of a two-carbon ketol group from sedoheptulose-7-phosphate to glyceraldehyde-3-phosphate, producing xylulose-5-phosphate and ribose-5-phosphate. In Escherichia coli (strain K12), this protein is Transketolase 1 (tktA).